The sequence spans 353 residues: Rhodopsin (353 aa).

The Extracellular segment spans residues 1-36 (MNGTEGPYFYIPMVNTTGIVRSPYEYPQYYLVNPAA). Asparagine 2 and asparagine 15 each carry an N-linked (GlcNAc...) asparagine glycan. Residues 37–61 (YAALGAYMFLLILVGFPVNFLTLYV) form a helical membrane-spanning segment. Topologically, residues 62–73 (TLEHKKLRTPLN) are cytoplasmic. A helical membrane pass occupies residues 74–96 (YILLNLAVADLFMVLGGFTTTMY). At 97-110 (TSMHGYFVLGRLGC) the chain is on the extracellular side. A disulfide bridge connects residues cysteine 110 and cysteine 187. A helical membrane pass occupies residues 111–133 (NVEGFFATLGGEIALWSLVVLAI). A 'Ionic lock' involved in activated form stabilization motif is present at residues 134-136 (ERW). Over 134 to 152 (ERWVVVCKPISNFRFSEDH) the chain is Cytoplasmic. A helical membrane pass occupies residues 153–173 (AIMGLAFTWVMASACAVPPLV). The Extracellular segment spans residues 174–202 (GWSRYIPEGMQCSCGIDYYTRAEGFNNES). The N-linked (GlcNAc...) asparagine glycan is linked to asparagine 200. The helical transmembrane segment at 203 to 224 (FVIYMFVCHFLIPLVVVFFCYG) threads the bilayer. Residues 225-252 (RLLCAVKEAAAAQQESETTQRAEREVSR) lie on the Cytoplasmic side of the membrane. The helical transmembrane segment at 253-274 (MVVIMVVAFLVCWCPYAGVAWY) threads the bilayer. The Extracellular segment spans residues 275–286 (IFTHQGSEFGPL). A helical membrane pass occupies residues 287–308 (FMTFPAFFAKSSSIYNPMIYIC). Lysine 296 is modified (N6-(retinylidene)lysine). At 309-353 (MNKQFRHCMITTLCCGKNPFEEEEGASTTSKTEASSVSSSSVSPA) the chain is on the cytoplasmic side. 2 S-palmitoyl cysteine lipidation sites follow: cysteine 322 and cysteine 323. The segment at 330 to 353 (EEEGASTTSKTEASSVSSSSVSPA) is disordered. Residues 334-353 (ASTTSKTEASSVSSSSVSPA) are compositionally biased toward low complexity.

This sequence belongs to the G-protein coupled receptor 1 family. Opsin subfamily. Post-translationally, phosphorylated on some or all of the serine and threonine residues present in the C-terminal region. Contains one covalently linked retinal chromophore.

It is found in the membrane. The protein localises to the cell projection. It localises to the cilium. Its subcellular location is the photoreceptor outer segment. Functionally, photoreceptor required for image-forming vision at low light intensity. While most salt water fish species use retinal as chromophore, most freshwater fish use 3-dehydroretinal, or a mixture of retinal and 3-dehydroretinal. Light-induced isomerization of 11-cis to all-trans retinal triggers a conformational change that activates signaling via G-proteins. Subsequent receptor phosphorylation mediates displacement of the bound G-protein alpha subunit by arrestin and terminates signaling. The protein is Rhodopsin (rho) of Chelon labrosus (Thicklip grey mullet).